Consider the following 983-residue polypeptide: Importin beta-like protein kap113 (983 aa).

The 73-residue stretch at Ala24 to Lys96 folds into the Importin N-terminal domain.

This sequence belongs to the importin beta family.

Its subcellular location is the nucleus. Its function is as follows. Functions as a component of the nuclear pore complex (NPC). NPC components, collectively referred to as nucleoporins (NUPs), can play the role of both NPC structural components and of docking or interaction partners for transiently associated nuclear transport factors. Active directional transport is assured by both, a Phe-Gly (FG) repeat affinity gradient for these transport factors across the NPC and a transport cofactor concentration gradient across the nuclear envelope. Involved in the export of mRNA from the nucleus to the cytoplasm. May play a role in mitotic spindle formation and/or function. This is Importin beta-like protein kap113 (kap113) from Schizosaccharomyces pombe (strain 972 / ATCC 24843) (Fission yeast).